Reading from the N-terminus, the 681-residue chain is Methionine--tRNA ligase (681 aa).

The 'HIGH' region signature appears at 27–37; sequence DYANGTPHIGH. The 'KMSKS' region motif lies at 316–320; the sequence is KMGKS. Lysine 319 is an ATP binding site. A disordered region spans residues 522–571; it reads FPKPEPKADETKNAEAKPPKPQAKKEKKTVTDTAPAKTTEQKPEAAAPAQ. The span at 525–539 shows a compositional bias: basic and acidic residues; that stretch reads PEPKADETKNAEAKP. The tRNA-binding domain maps to 580-681; the sequence is DFAKIDLRIA…LDLPSGTKVR (102 aa).

Belongs to the class-I aminoacyl-tRNA synthetase family. MetG type 2B subfamily. As to quaternary structure, homodimer.

The protein localises to the cytoplasm. The enzyme catalyses tRNA(Met) + L-methionine + ATP = L-methionyl-tRNA(Met) + AMP + diphosphate. In terms of biological role, is required not only for elongation of protein synthesis but also for the initiation of all mRNA translation through initiator tRNA(fMet) aminoacylation. In Deinococcus radiodurans (strain ATCC 13939 / DSM 20539 / JCM 16871 / CCUG 27074 / LMG 4051 / NBRC 15346 / NCIMB 9279 / VKM B-1422 / R1), this protein is Methionine--tRNA ligase (metG).